Consider the following 281-residue polypeptide: UPF0273 protein PAE3143 (281 aa).

Positions 4 to 248 constitute a KaiC domain; it reads PRVRSYVPGL…YIKITGSSVR (245 aa). Position 31–38 (31–38) interacts with ATP; it reads GGPGTGKS.

The protein belongs to the UPF0273 family.

This chain is UPF0273 protein PAE3143, found in Pyrobaculum aerophilum (strain ATCC 51768 / DSM 7523 / JCM 9630 / CIP 104966 / NBRC 100827 / IM2).